A 272-amino-acid polypeptide reads, in one-letter code: L-aspartate dehydrogenase (272 aa).

2 residues coordinate NAD(+): A125 and N192. Residue H222 is part of the active site.

It belongs to the L-aspartate dehydrogenase family.

It catalyses the reaction L-aspartate + NADP(+) + H2O = oxaloacetate + NH4(+) + NADPH + H(+). The enzyme catalyses L-aspartate + NAD(+) + H2O = oxaloacetate + NH4(+) + NADH + H(+). It participates in cofactor biosynthesis; NAD(+) biosynthesis; iminoaspartate from L-aspartate (dehydrogenase route): step 1/1. Its function is as follows. Specifically catalyzes the NAD or NADP-dependent dehydrogenation of L-aspartate to iminoaspartate. This Nitrosopumilus maritimus (strain SCM1) protein is L-aspartate dehydrogenase.